The chain runs to 199 residues: LexA repressor (199 aa).

A DNA-binding region (H-T-H motif) is located at residues I28–I47. Active-site for autocatalytic cleavage activity residues include S120 and K157.

This sequence belongs to the peptidase S24 family. In terms of assembly, homodimer.

The catalysed reaction is Hydrolysis of Ala-|-Gly bond in repressor LexA.. Represses a number of genes involved in the response to DNA damage (SOS response), including recA and lexA. In the presence of single-stranded DNA, RecA interacts with LexA causing an autocatalytic cleavage which disrupts the DNA-binding part of LexA, leading to derepression of the SOS regulon and eventually DNA repair. The polypeptide is LexA repressor (Thermosipho melanesiensis (strain DSM 12029 / CIP 104789 / BI429)).